The following is a 340-amino-acid chain: Phosphate acyltransferase (340 aa).

It belongs to the PlsX family. Homodimer. Probably interacts with PlsY.

It localises to the cytoplasm. The catalysed reaction is a fatty acyl-[ACP] + phosphate = an acyl phosphate + holo-[ACP]. The protein operates within lipid metabolism; phospholipid metabolism. Catalyzes the reversible formation of acyl-phosphate (acyl-PO(4)) from acyl-[acyl-carrier-protein] (acyl-ACP). This enzyme utilizes acyl-ACP as fatty acyl donor, but not acyl-CoA. The protein is Phosphate acyltransferase of Nostoc punctiforme (strain ATCC 29133 / PCC 73102).